A 746-amino-acid chain; its full sequence is Taurocyamine kinase (746 aa).

2 Approximate repeats span residues 31–393 (MQVE…PEGV) and 394–705 (MPVE…YGEH). Residues 35–116 (SLQNLQAKIR…FDAVIADYHK (82 aa)) enclose the Phosphagen kinase N-terminal 1 domain. The 237-residue stretch at 146–382 (LVVSTRVRLG…RALLELEVML (237 aa)) folds into the Phosphagen kinase C-terminal 1 domain. Residues 149–153 (STRVR), histidine 212, and arginine 256 contribute to the ATP site. Residue cysteine 298 is part of the active site. ATP-binding positions include 307–311 (RASVH) and 335–340 (RGTHGE). A Phosphagen kinase N-terminal 2 domain is found at 398–479 (PLTYLAKLLE…LDPLICDYHG (82 aa)). The Phosphagen kinase C-terminal 2 domain maps to 509-746 (FIVSTRVRVG…AKMIEIEKGL (238 aa)). ATP contacts are provided by residues 512-516 (STRVR), histidine 575, and arginine 619. The active site involves cysteine 661. ATP contacts are provided by residues 670 to 674 (RASVL) and 699 to 704 (RGLYGE).

This sequence belongs to the ATP:guanido phosphotransferase family. The cofactor is Mg(2+).

The catalysed reaction is taurocyamine + ATP = N-phosphotaurocyamine + ADP + H(+). Functionally, this family of enzymes reversibly catalyzes the transfer of phosphate between ATP and various phosphogens (e.g. creatine phosphate). The sequence is that of Taurocyamine kinase from Schistosoma mansoni (Blood fluke).